The primary structure comprises 146 residues: MVKPIHVLSGPNLNLLGTREPEIYGKDTLDDVRTRCEARAASRGVSVVFRQSNHEGVLIDWVHEARESASALVINPAGYGHTSIALLDALKTLSIPVIECHLSNPAAREEFRRHTYVSLAATGIVSGFGAASYELAIEAAFGLIRA.

Tyr-24 acts as the Proton acceptor in catalysis. Substrate contacts are provided by Asn-75, His-81, and Asp-88. His-101 serves as the catalytic Proton donor. Residues 102–103 (LS) and Arg-112 each bind substrate.

This sequence belongs to the type-II 3-dehydroquinase family. Homododecamer.

The enzyme catalyses 3-dehydroquinate = 3-dehydroshikimate + H2O. It functions in the pathway metabolic intermediate biosynthesis; chorismate biosynthesis; chorismate from D-erythrose 4-phosphate and phosphoenolpyruvate: step 3/7. Functionally, catalyzes a trans-dehydration via an enolate intermediate. This is 3-dehydroquinate dehydratase from Caulobacter vibrioides (strain ATCC 19089 / CIP 103742 / CB 15) (Caulobacter crescentus).